The primary structure comprises 443 residues: Cyclic AMP receptor 4 (443 aa).

Residues 1-11 (MKVLQEINLTY) are Extracellular-facing. The N-linked (GlcNAc...) asparagine glycan is linked to Asn-8. A helical transmembrane segment spans residues 12–32 (SILVIADFSSIFGCLLVLIAF). Residues 33–44 (KKLKLLRNHITR) are Cytoplasmic-facing. The helical transmembrane segment at 45 to 65 (VIACFCVSSLLKDIISTGLTL) threads the bilayer. The Extracellular portion of the chain corresponds to 66 to 89 (SLGPQNEAGSTSFQCYLYAITITY). Residues 90-110 (GSLACWLWTLCLAFSIYNLIV) form a helical membrane-spanning segment. The Cytoplasmic segment spans residues 111-119 (KREPEPEKY). Residues 120–140 (EKFYHGVCWTIPLICVIVMLA) form a helical membrane-spanning segment. The Extracellular segment spans residues 141-161 (KKTIEPVGNWCWISEKYVGYR). The helical transmembrane segment at 162–182 (FGLFYGPFFAIWIISAVLVGL) threads the bilayer. Over 183-208 (TSRYTYSVIRNSVSDNKDKHMTYQFK) the chain is Cytoplasmic. A helical membrane pass occupies residues 209–229 (LINYIIVFLLCWVFAIVNRIL). Residues 230–263 (NGLGYYPTLPNILHTYFSVSHGFFASVTFIYNNP) lie on the Extracellular side of the membrane. Residues 264 to 284 (LMWRYWGSKIFLIFAKFGYFV) traverse the membrane as a helical segment. Topologically, residues 285–443 (ELQRRLDRNK…DEREKKDNKF (159 aa)) are cytoplasmic. Disordered regions lie at residues 325 to 354 (NDIS…QQSP) and 396 to 443 (SFEI…DNKF). The segment covering 332–352 (QQQQQQQQTPQQPQQQFQQQQ) has biased composition (low complexity). A compositionally biased stretch (polar residues) spans 396–410 (SFEITQPSNDLNTIE). Residues 411–425 (NNNNYNNNNNNNNNN) are compositionally biased toward low complexity. The span at 429-443 (IEKEKDEREKKDNKF) shows a compositional bias: basic and acidic residues.

The protein belongs to the G-protein coupled receptor 5 family. C-terminal Ser or Thr residues may be phosphorylated.

The protein resides in the membrane. In terms of biological role, receptor for cAMP. Regulates axial patterning and cellular differentiation during late development. The activity of this receptor is mediated by G proteins. This is Cyclic AMP receptor 4 (carD) from Dictyostelium discoideum (Social amoeba).